Here is a 312-residue protein sequence, read N- to C-terminus: Beta-ketoacyl-[acyl-carrier-protein] synthase III (312 aa).

Residues Cys112 and His237 contribute to the active site. Residues 238-242 (QANIR) are ACP-binding. Asn267 is a catalytic residue.

It belongs to the thiolase-like superfamily. FabH family. Homodimer.

The protein localises to the cytoplasm. It catalyses the reaction malonyl-[ACP] + acetyl-CoA + H(+) = 3-oxobutanoyl-[ACP] + CO2 + CoA. Its pathway is lipid metabolism; fatty acid biosynthesis. In terms of biological role, catalyzes the condensation reaction of fatty acid synthesis by the addition to an acyl acceptor of two carbons from malonyl-ACP. Catalyzes the first condensation reaction which initiates fatty acid synthesis and may therefore play a role in governing the total rate of fatty acid production. Possesses both acetoacetyl-ACP synthase and acetyl transacylase activities. Its substrate specificity determines the biosynthesis of branched-chain and/or straight-chain of fatty acids. The chain is Beta-ketoacyl-[acyl-carrier-protein] synthase III from Listeria welshimeri serovar 6b (strain ATCC 35897 / DSM 20650 / CCUG 15529 / CIP 8149 / NCTC 11857 / SLCC 5334 / V8).